Consider the following 815-residue polypeptide: MEAHFVAAAAHSAAFGDRVGGESPYLSHIVLSERCMVNFGVPTFLLASGNNFYAEVQIRFHGCLQCTQWRRVFSVYAPSSAIDRILLPDVSSGNCGRSAPFRIMYDSGNSWGGLFISVPVFCDPEKLTFDGYTAVAVRLAICGSADEFYEMLFTYDELAQPQTRFYADAGRFDALALQICEYHIPAAWPSRRKEEFLNLRGRLLELIAARGSTRQLDKVLRADSYITHEQPLVPDPPKEDEAASEAKKKEADDAMKKLKDAAAKVASSDANRQREPGDREQGVSAALLSTCSGMPGDHHAPQHAAVAGAVKAVASGLNSIVRGLSAAGGAAATSASQLADIRYTDALLAGLEPPGRNRGEPRPQRRVPDLESVVMDDGQSRHDRVIPASGLGGARAPASVEECLKALCAIISDPGTPPQSAWTFGPISIVTHSCYNSGSPILIVTYSDGGRRAYPPIVSGITALSEALLAAGASFPSDLNEDEKAELLRKAPCFARPMAADEAREYQKLFSVDSEQVFLFGLQARVTTAMITALTVAVARATDQAADNLLLNQIVSYDLAVRDDDDLPGGRGQRDRLAVAQYDGDRAAGHWPAKLASQAADLIAWFCVNLQTESFATFARSGVWKAILTSLVAEDTLHRLPFLAPFHSDPAIYMFDYFRFGAGNMSRVTGDPNVIRFKPALRTGLMDCEFISGAASPAHPWAVHKFLPGQFHSYLCVGLNSELEGLLIFPGGFGLRFDLGETLDEVWDKNLDRAVLDRYSRLANISGGPPRADRGADCAIADVGCAYPYLKSAPRAPSDFSTTSTSGHESVTILY.

2 disordered regions span residues 227–280 and 795–815; these read THEQ…GDRE and RAPSDFSTTSTSGHESVTILY. 2 stretches are compositionally biased toward basic and acidic residues: residues 236–262 and 271–280; these read PPKEDEAASEAKKKEADDAMKKLKDAA and NRQREPGDRE. Positions 799–809 are enriched in polar residues; sequence DFSTTSTSGHE.

Belongs to the herpesviridae CVC1 protein family. As to quaternary structure, interacts (via C-terminus) with capsid vertex component 2/CVC2.

The protein localises to the virion. Its subcellular location is the host nucleus. Functionally, capsid vertex-specific component that plays a role during viral DNA encapsidation, assuring correct genome cleavage and presumably stabilizing capsids that contain full-length viral genomes. The protein is Capsid vertex component 1 of Amazona oratrix (yellow-headed parrot).